The following is a 790-amino-acid chain: Disintegrin and metalloproteinase domain-containing protein 30 (790 aa).

A signal peptide spans 1–27 (MRSVQIFLSQCRLLLLLVPTMLLKSLG). The propeptide occupies 28 to 198 (EDVIFHPEGE…KARLRDFPGS (171 aa)). The Cysteine switch signature appears at 170–177 (QVCGLSDD). A Zn(2+)-binding site is contributed by Cys172. At 199-687 (YKHPKYLELI…LRGAIPSSIW (489 aa)) the chain is on the extracellular side. Residues 203–393 (KYLELILLFD…SGATCLNNIP (191 aa)) enclose the Peptidase M12B domain. Asn222 carries an N-linked (GlcNAc...) asparagine glycan. 3 disulfide bridges follow: Cys313–Cys388, Cys353–Cys373, and Cys355–Cys361. His338 is a Zn(2+) binding site. Glu339 is a catalytic residue. The Zn(2+) site is built by His342 and His348. Asn372, Asn438, Asn473, and Asn625 each carry an N-linked (GlcNAc...) asparagine glycan. Positions 399-485 (LKRCGNKIVE…SCPNDVYKQD (87 aa)) constitute a Disintegrin domain. An intrachain disulfide couples Cys457 to Cys477. Residues 629 to 663 (LQFDCLPEKCNTRGVCNNRKNCHCMYGWAPPFCEE) form the EGF-like domain. Disulfide bonds link Cys633–Cys644, Cys638–Cys650, and Cys652–Cys661. Residues 688 to 708 (VVSIIMFRLILLILSVVFVFF) form a helical membrane-spanning segment. Residues 709 to 790 (RQVIGNHLKP…KAKSVKKQKK (82 aa)) lie on the Cytoplasmic side of the membrane. Positions 720–779 (QEKMPLSKAKTEQEESKTKTVQEESKTKTGQEESEAKTGQEESKAKTGQEESKANIESKR) are enriched in basic and acidic residues. Residues 720–790 (QEKMPLSKAK…KAKSVKKQKK (71 aa)) form a disordered region. 5 tandem repeats follow at residues 732 to 740 (QEESKTKTV), 741 to 749 (QEESKTKTG), 750 to 758 (QEESEAKTG), 759 to 767 (QEESKAKTG), and 768 to 776 (QEESKANIE). The tract at residues 732–776 (QEESKTKTVQEESKTKTGQEESEAKTGQEESKAKTGQEESKANIE) is 5 X 9 AA approximate repeats. The span at 780 to 790 (PKAKSVKKQKK) shows a compositional bias: basic residues.

In terms of assembly, interacts with CTSD; this leads to activation of CTSD. The cofactor is Zn(2+). Expressed in brain neurons (at protein level). Expressed in testis.

The protein resides in the late endosome membrane. Plays a role in lysosomal amyloid precursor protein (APP) processing by cleaving and activating CTSD/cathepsin D which leads to APP degradation. This chain is Disintegrin and metalloproteinase domain-containing protein 30 (ADAM30), found in Homo sapiens (Human).